Here is a 139-residue protein sequence, read N- to C-terminus: ATP synthase epsilon chain (139 aa).

It belongs to the ATPase epsilon chain family. As to quaternary structure, F-type ATPases have 2 components, CF(1) - the catalytic core - and CF(0) - the membrane proton channel. CF(1) has five subunits: alpha(3), beta(3), gamma(1), delta(1), epsilon(1). CF(0) has three main subunits: a, b and c.

The protein resides in the cell inner membrane. In terms of biological role, produces ATP from ADP in the presence of a proton gradient across the membrane. The protein is ATP synthase epsilon chain of Acinetobacter baylyi (strain ATCC 33305 / BD413 / ADP1).